The primary structure comprises 378 residues: MTENKSFKESHPLDDFISDKELSNTTIQKEKLTIEQQKQVDTISKQINPLDNEGLLAFGSDLQKQMSQFSHQMLDEVQSKDVGPIGDTLSDLMSKLKSVNPNELNTDKPSMLKRIFSRAKSSINEIFSRMQSVSAQVDRITIQLQKHQTHLTRDIELLDTLYDKNKQYFDDLSLYIIAAQQKKLQLENEKLPQLQQQAQQSTNQMDIQQVADMQQFIDRLDKRIYDLQLSRQIALQTAPQIRMIQNVNQALAEKIQSSILTSIPLWKNQMAIALTLMRQRNAVAAQRAVTDTTNDLLTANAEMLKQNAIETATENERGIVDLDTLKRTQRNIIETIEETLIIQQHGREERQLAEKELQQLEQDLKSHLVNIKGPNKQS.

Belongs to the TelA family.

This chain is TelA-like protein SAB1262, found in Staphylococcus aureus (strain bovine RF122 / ET3-1).